The sequence spans 206 residues: Small ribosomal subunit protein uS4 (206 aa).

Over residues 25-39 the composition is skewed to basic and acidic residues; that stretch reads DKLLDRKPNGPGKER. A disordered region spans residues 25-49; the sequence is DKLLDRKPNGPGKERGARKRGKTSV. Positions 95-157 constitute an S4 RNA-binding domain; the sequence is QRLDNTIYRM…KGIQNLIRHN (63 aa).

Belongs to the universal ribosomal protein uS4 family. Part of the 30S ribosomal subunit. Contacts protein S5. The interaction surface between S4 and S5 is involved in control of translational fidelity.

One of the primary rRNA binding proteins, it binds directly to 16S rRNA where it nucleates assembly of the body of the 30S subunit. In terms of biological role, with S5 and S12 plays an important role in translational accuracy. This Treponema denticola (strain ATCC 35405 / DSM 14222 / CIP 103919 / JCM 8153 / KCTC 15104) protein is Small ribosomal subunit protein uS4.